The following is a 245-amino-acid chain: Tetraspanin-6 (245 aa).

The Cytoplasmic segment spans residues 1-19 (MASPSRRLQTKPVITCFKS). Residues 20 to 40 (VLLIYTFIFWITGVILLAVGI) traverse the membrane as a helical segment. Residues 41–59 (WGKVSLENYFSLLNEKATN) are Extracellular-facing. A helical membrane pass occupies residues 60 to 80 (VPFVLIATGTVIILLGTFGCF). Residues 81–93 (ATCRASAWMLKLY) are Cytoplasmic-facing. Residues 94-114 (AMFLTLVFLVELVAAIVGFVF) form a helical membrane-spanning segment. The Extracellular portion of the chain corresponds to 115–208 (RHEIKNSFKN…IKVMTIIESE (94 aa)). An N-linked (GlcNAc...) asparagine glycan is attached at Asn-134. A helical transmembrane segment spans residues 209 to 229 (MGVVAGISFGVACFQLIGIFL). Residues 230–245 (AYCLSRAITNNQYEIV) lie on the Cytoplasmic side of the membrane.

Belongs to the tetraspanin (TM4SF) family.

Its subcellular location is the membrane. In Homo sapiens (Human), this protein is Tetraspanin-6 (TSPAN6).